The following is a 107-amino-acid chain: Small ribosomal subunit protein uS15 (107 aa).

Lysine 27 carries the post-translational modification N6-acetyllysine; alternate. Position 27 is an N6-succinyllysine; alternate (lysine 27). Lysine 27 is covalently cross-linked (Glycyl lysine isopeptide (Lys-Gly) (interchain with G-Cter in ubiquitin)). Phosphoserine is present on serine 30. At lysine 34 the chain carries N6-succinyllysine. Phosphotyrosine is present on tyrosine 38. Lysine 43 participates in a covalent cross-link: Glycyl lysine isopeptide (Lys-Gly) (interchain with G-Cter in SUMO2).

The protein belongs to the universal ribosomal protein uS15 family. In terms of assembly, component of the small ribosomal subunit. Part of the small subunit (SSU) processome, composed of more than 70 proteins and the RNA chaperone small nucleolar RNA (snoRNA) U3. In terms of processing, ubiquitinated at Lys-27 by RNF14 and RNF25 in response to ribosome collisions (ribosome stalling).

The protein resides in the cytoplasm. It localises to the nucleus. Its subcellular location is the nucleolus. Component of the small ribosomal subunit. The ribosome is a large ribonucleoprotein complex responsible for the synthesis of proteins in the cell. Part of the small subunit (SSU) processome, first precursor of the small eukaryotic ribosomal subunit. During the assembly of the SSU processome in the nucleolus, many ribosome biogenesis factors, an RNA chaperone and ribosomal proteins associate with the nascent pre-rRNA and work in concert to generate RNA folding, modifications, rearrangements and cleavage as well as targeted degradation of pre-ribosomal RNA by the RNA exosome. In Sus scrofa (Pig), this protein is Small ribosomal subunit protein uS15 (RPS13).